Here is a 361-residue protein sequence, read N- to C-terminus: tRNA 2-selenouridine synthase (361 aa).

A Rhodanese domain is found at 11–134 (LIADTPLIDV…LRQTAIQATW (124 aa)). Catalysis depends on cysteine 94, which acts as the S-selanylcysteine intermediate.

Belongs to the SelU family. Monomer.

The catalysed reaction is 5-methylaminomethyl-2-thiouridine(34) in tRNA + selenophosphate + (2E)-geranyl diphosphate + H2O + H(+) = 5-methylaminomethyl-2-selenouridine(34) in tRNA + (2E)-thiogeraniol + phosphate + diphosphate. It carries out the reaction 5-methylaminomethyl-2-thiouridine(34) in tRNA + (2E)-geranyl diphosphate = 5-methylaminomethyl-S-(2E)-geranyl-thiouridine(34) in tRNA + diphosphate. The enzyme catalyses 5-methylaminomethyl-S-(2E)-geranyl-thiouridine(34) in tRNA + selenophosphate + H(+) = 5-methylaminomethyl-2-(Se-phospho)selenouridine(34) in tRNA + (2E)-thiogeraniol. It catalyses the reaction 5-methylaminomethyl-2-(Se-phospho)selenouridine(34) in tRNA + H2O = 5-methylaminomethyl-2-selenouridine(34) in tRNA + phosphate. Functionally, involved in the post-transcriptional modification of the uridine at the wobble position (U34) of tRNA(Lys), tRNA(Glu) and tRNA(Gln). Catalyzes the conversion of 2-thiouridine (S2U-RNA) to 2-selenouridine (Se2U-RNA). Acts in a two-step process involving geranylation of 2-thiouridine (S2U) to S-geranyl-2-thiouridine (geS2U) and subsequent selenation of the latter derivative to 2-selenouridine (Se2U) in the tRNA chain. This chain is tRNA 2-selenouridine synthase, found in Salmonella arizonae (strain ATCC BAA-731 / CDC346-86 / RSK2980).